The sequence spans 140 residues: MKTSTALVLLLALTATSASSGDHQFIDEQNIMNVAEGKNVISSLSSSGGGDDAAAIMESVLVNGGNRKMVFMMVSGSQANCIPTGQPCGVLHQCCDGNFCTDPFYGTCTVKHCVPKGQPCGVLHPCCEGMCPDPIYGTCR.

The first 18 residues, 1-18 (MKTSTALVLLLALTATSA), serve as a signal peptide directing secretion. Residues 19-78 (SSGDHQFIDEQNIMNVAEGKNVISSLSSSGGGDDAAAIMESVLVNGGNRKMVFMMVSGSQ) constitute a propeptide that is removed on maturation. 6 cysteine pairs are disulfide-bonded: Cys81/Cys95, Cys88/Cys100, Cys94/Cys108, Cys113/Cys127, Cys120/Cys131, and Cys126/Cys139.

Belongs to the urticatoxin-2 family. In terms of tissue distribution, expressed in trichomes, that are stiff epidermal hairs located on the surface of petioles and leaves.

It localises to the secreted. Functionally, plant defense neurotoxin that causes pain and systemic symptoms in mammals via modulation of voltage-gated sodium channels (Nav). Potent modulator of human Nav1.5/SCN5A (EC(50)=55 nM), Nav1.6/SCN8A (EC(50)=0.86 nM), and Nav1.7/SCN9A (EC(50)=208 nM), where it shifts the activation threshold to more negative potentials and delays fast inactivation. Also shifts the voltage-dependence of steady-state fast inactivation of Nav1.6/SCN8A, but not that of Nav1.5/SCN5A or Nav1.7/SCN9A. On Nav1.7/SCN9A, principally acts by binding to extracellular loops of domain IV (Nav site 3). In vivo, intraplantar injection into mice causes numerous dose-dependent, immediate, and long-lasting spontaneous pain behaviors, while no swelling is observed in the injected paw. At the highest doses tested, systemic symptoms including hypokinesia and hypersalivation are observed. The protein is Beta/delta-urticatoxin-De2a of Dendrocnide excelsa (Giant stinging tree).